We begin with the raw amino-acid sequence, 517 residues long: MVFPIEAIVGLVTFTFLFFFLWTKKSQKPSKPLPPKIPGGWPVIGHLFHFNDDGDDRPLARKLGDLADKYGPVFTFRLGLPLVLVVSSYEAVKDCFSTNDAIFSNRPAFLYGDYLGYNNAMLFLANYGPYWRKNRKLVIQEVLSASRLEKFKHVRFARIQASIKNLYTRIDGNSSTINLTDWLEELNFGLIVKMIAGKNYESGKGDEQVERFKKAFKDFMILSMEFVLWDAFPIPLFKWVDFQGHVKAMKRTFKDIDSVFQNWLEEHINKREKMEVNAEGNEQDFIDVVLSKMSNEYLGEGYSRDTVIKATVFSLVLDAADTVALHINWGMALLINNQKALTKAQEEIDTKVGKDRWVEESDIKDLVYLQAIVKEVLRLYPPGPLLVPHENVEDCVVSGYHIPKGTRLFANVMKLQRDPKLWSDPDTFDPERFIATDIDFRGQYYKYIPFGSGRRSCPGMTYALQVEHLTMAHLIQGFNYRTPNDEPLDMKEGAGITIRKVNPVELIIAPRLAPELY.

Residues 2 to 22 form a helical membrane-spanning segment; the sequence is VFPIEAIVGLVTFTFLFFFLW. Residue Lys-254 forms a Glycyl lysine isopeptide (Lys-Gly) (interchain with G-Cter in ubiquitin) linkage. Cys-457 serves as a coordination point for heme.

It belongs to the cytochrome P450 family. CYP82E2 subfamily. It depends on heme as a cofactor. In terms of tissue distribution, expressed at low levels in green leaves.

Its subcellular location is the membrane. The catalysed reaction is (S)-nicotine + reduced [NADPH--hemoprotein reductase] + O2 = (S)-nornicotine + formaldehyde + oxidized [NADPH--hemoprotein reductase] + H2O + H(+). It functions in the pathway alkaloid biosynthesis; nicotine biosynthesis. Its function is as follows. Involved in the biosynthesis of pyridine alkaloid natural products, leading mainly to the production of anabasine, anatabine, nicotine and nornicotine, effective deterrents against herbivores with antiparasitic and pesticide properties (neurotoxins); nornicotine serves as the precursor in the synthesis of the carcinogen compound N'-nitrosonornicotine (NNN). Catalyzes the demethylation of nicotine to form nornicotine. This chain is Nicotine N-demethylase CYP82E4, found in Nicotiana tabacum (Common tobacco).